We begin with the raw amino-acid sequence, 945 residues long: Cysteine-rich, acidic integral membrane protein (945 aa).

A disordered region spans residues 1–20 (MGNEAGPIFEESNAEVGTPP). Positions 1-23 (MGNEAGPIFEESNAEVGTPPADA) are cleaved as a signal peptide. Residues 24 to 882 (VHDDFFFDYK…GKGSSVSAGL (859 aa)) are Extracellular-facing. N-linked (GlcNAc...) asparagine glycans are attached at residues asparagine 34 and asparagine 43. Repeat copies occupy residues 40 to 51 (DDCNITGDCNET), 52 to 63 (DDCDITGDCNET), 64 to 75 (DDCNITGDCNET), 76 to 87 (DDCNITGDCNET), 88 to 99 (DDCNITGDCNET), 100 to 111 (DDCNITGDCNET), 112 to 123 (DDCDITGDCNET), 124 to 135 (DDCNITGDCNET), 136 to 147 (DDCNITGDCNET), 148 to 159 (DDCNITGDCNET), 160 to 171 (DDCDITGDCNET), 172 to 183 (DDCNITGDCNET), 184 to 195 (DDCDITGDCNET), 196 to 207 (DDCNITGDCNET), 208 to 219 (DDCNITGDCNET), 220 to 231 (DDCNITGDCNET), 232 to 243 (DDCNITGDCNET), 244 to 255 (DDCNITGDCNET), 256 to 267 (DDCNITGDCNET), 268 to 279 (DDCDITGDCNET), 280 to 291 (DDCNITGDCNET), 292 to 303 (DDCNITGDCNET), 304 to 315 (DDCNITGDCNET), 316 to 327 (DDCNITGDCNET), 328 to 339 (DDCNITGDCNET), 340 to 351 (DDCNITGDCNET), 352 to 363 (DDCDITGDCNET), 364 to 375 (DDCNITGDCNET), 376 to 387 (DDCNITGDCNET), 388 to 399 (DDCNITGDCNET), 400 to 411 (DDCNITGDCNET), 412 to 423 (DDCNITGDCNET), 424 to 435 (DDCDITGDCNET), 436 to 447 (DDCNITGDCNET), 448 to 459 (DDCDITGDCNET), 460 to 471 (DDCNITGDCNET), 472 to 483 (DDCNITGDCNET), 484 to 495 (DDCNITGDCNET), 496 to 507 (DDCNITGDCNET), 508 to 519 (DDCNITGDCNET), 520 to 531 (DDCNITGDCNET), 532 to 543 (DDCDITGDCNET), 544 to 555 (DDCNITGDCNET), 556 to 567 (DDCNITGDCNET), 568 to 579 (DDCNITGDCNET), 580 to 591 (DDCNITGDCNET), 592 to 603 (DDCNITGDCNET), 604 to 615 (DDCDITGDCNET), 616 to 627 (DDCNITGDCNET), 628 to 639 (DDCDITGDCNET), 640 to 651 (DDCNITGDCNET), 652 to 663 (DDCNITGDCNET), 664 to 675 (DDCNITGDCNET), 676 to 687 (DDCNITGDCNET), 688 to 699 (DDCNITGDCNET), 700 to 711 (DDCNITGDCNET), 712 to 723 (DDCDITGDCNET), 724 to 735 (DDCNITGDCNET), 736 to 747 (DDCNITGDCNET), 748 to 759 (DDCNITGDCNET), 760 to 771 (DDCNITGDCNET), 772 to 783 (DDCNITGDCNET), 784 to 795 (DDCDITGDCNET), 796 to 807 (DDCNITGDCNET), 808 to 819 (DDCDITGDCNET), and 820 to 831 (DDCNITGDCNET). Positions 40-831 (DDCNITGDCN…CNITGDCNET (792 aa)) are 66 X 12 AA tandem repeats of D-D-C-[ND]-I-T-G-D-G-N-E-T. Residues asparagine 67, asparagine 79, asparagine 91, and asparagine 103 are each glycosylated (N-linked (GlcNAc...) asparagine). 3 N-linked (GlcNAc...) asparagine glycosylation sites follow: asparagine 127, asparagine 139, and asparagine 151. Asparagine 175 is a glycosylation site (N-linked (GlcNAc...) asparagine). N-linked (GlcNAc...) asparagine glycans are attached at residues asparagine 199, asparagine 211, asparagine 223, asparagine 235, asparagine 247, and asparagine 259. N-linked (GlcNAc...) asparagine glycosylation is found at asparagine 283, asparagine 295, asparagine 307, asparagine 319, asparagine 331, and asparagine 343. N-linked (GlcNAc...) asparagine glycosylation is found at asparagine 367, asparagine 379, asparagine 391, asparagine 403, and asparagine 415. Residue asparagine 439 is glycosylated (N-linked (GlcNAc...) asparagine). Residues asparagine 463, asparagine 475, asparagine 487, asparagine 499, asparagine 511, and asparagine 523 are each glycosylated (N-linked (GlcNAc...) asparagine). Residues asparagine 547, asparagine 559, asparagine 571, asparagine 583, and asparagine 595 are each glycosylated (N-linked (GlcNAc...) asparagine). Asparagine 619 carries N-linked (GlcNAc...) asparagine glycosylation. 6 N-linked (GlcNAc...) asparagine glycosylation sites follow: asparagine 643, asparagine 655, asparagine 667, asparagine 679, asparagine 691, and asparagine 703. 5 N-linked (GlcNAc...) asparagine glycosylation sites follow: asparagine 727, asparagine 739, asparagine 751, asparagine 763, and asparagine 775. The N-linked (GlcNAc...) asparagine glycan is linked to asparagine 799. N-linked (GlcNAc...) asparagine glycosylation occurs at asparagine 823. A helical transmembrane segment spans residues 883–903 (LLLAGSTFLVLAVGLSAVLFL). At 904-945 (GRERQNAVVICDNEVMMEEVPGCLSDASFAVPVTQSSDEARP) the chain is on the cytoplasmic side.

Its subcellular location is the flagellar pocket. The protein localises to the cell membrane. Its function is as follows. Supposed to function as cell surface receptor. Possibly involved in receptor-mediated endocytosis. In Trypanosoma brucei brucei, this protein is Cysteine-rich, acidic integral membrane protein (CRAM).